The following is a 363-amino-acid chain: Protein-arginine kinase (363 aa).

Residues 24-254 (IVLSSRIRLA…AQLIEQERSA (231 aa)) enclose the Phosphagen kinase C-terminal domain. Residues 27-31 (SSRIR), His92, Arg125, 176-180 (RASVM), and 207-212 (RGIYGE) contribute to the ATP site. An RDXXRA motif of the pArg binding pocket involved in allosteric regulation motif is present at residues 337–342 (RDIKRA).

This sequence belongs to the ATP:guanido phosphotransferase family.

It catalyses the reaction L-arginyl-[protein] + ATP = N(omega)-phospho-L-arginyl-[protein] + ADP + H(+). Appears to be allosterically activated by the binding of pArg-containing polypeptides to the pArg-binding pocket localized in the C-terminal domain of McsB. Its function is as follows. Catalyzes the specific phosphorylation of arginine residues in a large number of proteins. Is part of the bacterial stress response system. Protein arginine phosphorylation has a physiologically important role and is involved in the regulation of many critical cellular processes, such as protein homeostasis, motility, competence, and stringent and stress responses, by regulating gene expression and protein activity. This Bacillus pumilus (strain SAFR-032) protein is Protein-arginine kinase.